The primary structure comprises 83 residues: SPPVCGNELLEEGEECDCGSPANCQDRCCNAATCKLTPGSQCSYGECCDQCKFKKARTVCRIARGDWNDDYCTGKSSDCPWNH.

Residues 2–83 enclose the Disintegrin domain; it reads PPVCGNELLE…GKSSDCPWNH (82 aa). 7 disulfides stabilise this stretch: C5-C24, C16-C34, C18-C29, C28-C51, C42-C48, C47-C72, and C60-C79. A Cell attachment site motif is present at residues 64–66; it reads RGD.

The protein belongs to the venom metalloproteinase (M12B) family. P-II subfamily. P-IIa sub-subfamily. In terms of assembly, monomer (disintegrin). Expressed by the venom gland.

It localises to the secreted. In terms of biological role, inhibits fibrinogen interaction with platelets. Acts by binding to alpha-IIb/beta-3 (ITGA2B/ITGB3) on the platelet surface and inhibits aggregation induced by ADP, thrombin, platelet-activating factor and collagen. The chain is Disintegrin isoform D-3 from Bitis arietans (African puff adder).